Consider the following 270-residue polypeptide: Thiazole synthase (270 aa).

K111 acts as the Schiff-base intermediate with DXP in catalysis. 1-deoxy-D-xylulose 5-phosphate contacts are provided by residues G172, A198 to G199, and N220 to T221.

Belongs to the ThiG family. As to quaternary structure, homotetramer. Forms heterodimers with either ThiH or ThiS.

It is found in the cytoplasm. It catalyses the reaction [ThiS sulfur-carrier protein]-C-terminal-Gly-aminoethanethioate + 2-iminoacetate + 1-deoxy-D-xylulose 5-phosphate = [ThiS sulfur-carrier protein]-C-terminal Gly-Gly + 2-[(2R,5Z)-2-carboxy-4-methylthiazol-5(2H)-ylidene]ethyl phosphate + 2 H2O + H(+). It participates in cofactor biosynthesis; thiamine diphosphate biosynthesis. Functionally, catalyzes the rearrangement of 1-deoxy-D-xylulose 5-phosphate (DXP) to produce the thiazole phosphate moiety of thiamine. Sulfur is provided by the thiocarboxylate moiety of the carrier protein ThiS. In vitro, sulfur can be provided by H(2)S. This is Thiazole synthase from Methylococcus capsulatus (strain ATCC 33009 / NCIMB 11132 / Bath).